A 338-amino-acid polypeptide reads, in one-letter code: Lipoate-protein ligase A (338 aa).

The 188-residue stretch at 29–216 (DPNQRVLFLW…AFFSHYGERV (188 aa)) folds into the BPL/LPL catalytic domain. Residues arginine 71, 76-79 (GAVF), and lysine 134 contribute to the ATP site. Residue lysine 134 coordinates (R)-lipoate.

This sequence belongs to the LplA family. Monomer.

The protein resides in the cytoplasm. It catalyses the reaction L-lysyl-[lipoyl-carrier protein] + (R)-lipoate + ATP = N(6)-[(R)-lipoyl]-L-lysyl-[lipoyl-carrier protein] + AMP + diphosphate + H(+). It functions in the pathway protein modification; protein lipoylation via exogenous pathway; protein N(6)-(lipoyl)lysine from lipoate: step 1/2. Its pathway is protein modification; protein lipoylation via exogenous pathway; protein N(6)-(lipoyl)lysine from lipoate: step 2/2. In terms of biological role, catalyzes both the ATP-dependent activation of exogenously supplied lipoate to lipoyl-AMP and the transfer of the activated lipoyl onto the lipoyl domains of lipoate-dependent enzymes. In Aeromonas hydrophila subsp. hydrophila (strain ATCC 7966 / DSM 30187 / BCRC 13018 / CCUG 14551 / JCM 1027 / KCTC 2358 / NCIMB 9240 / NCTC 8049), this protein is Lipoate-protein ligase A.